The chain runs to 172 residues: Major exported protein (172 aa).

Belongs to the hcp1 family.

The protein resides in the secreted. The chain is Major exported protein (hcpA) from Pseudomonas aeruginosa (strain ATCC 15692 / DSM 22644 / CIP 104116 / JCM 14847 / LMG 12228 / 1C / PRS 101 / PAO1).